Consider the following 245-residue polypeptide: Small ribosomal subunit protein uS3 (245 aa).

Positions 38–106 (IRKYLNTRLA…EVQINIFEIK (69 aa)) constitute a KH type-2 domain. The segment at 225–245 (YEGSGDKSVKRRKRNGIKKNE) is disordered. Residues 233–245 (VKRRKRNGIKKNE) are compositionally biased toward basic residues.

Belongs to the universal ribosomal protein uS3 family. As to quaternary structure, part of the 30S ribosomal subunit. Forms a tight complex with proteins S10 and S14.

Its function is as follows. Binds the lower part of the 30S subunit head. Binds mRNA in the 70S ribosome, positioning it for translation. The chain is Small ribosomal subunit protein uS3 from Azobacteroides pseudotrichonymphae genomovar. CFP2.